The following is a 245-amino-acid chain: Adenosylcobinamide-GDP ribazoletransferase (245 aa).

The next 5 membrane-spanning stretches (helical) occupy residues 35–55, 108–128, 137–157, 176–196, and 197–217; these read WFPLAGLVVGGACWLPFALGL, IGAFGVMGLLLGFGGQYIGAH, GVLIAAPIVGRGACVILAALV, IAIGVAATCGMLALLLTTPAI, and TTVTTIAICGAIVTALAHLAR.

This sequence belongs to the CobS family. Requires Mg(2+) as cofactor.

The protein localises to the cell inner membrane. It carries out the reaction alpha-ribazole + adenosylcob(III)inamide-GDP = adenosylcob(III)alamin + GMP + H(+). The catalysed reaction is alpha-ribazole 5'-phosphate + adenosylcob(III)inamide-GDP = adenosylcob(III)alamin 5'-phosphate + GMP + H(+). It participates in cofactor biosynthesis; adenosylcobalamin biosynthesis; adenosylcobalamin from cob(II)yrinate a,c-diamide: step 7/7. Functionally, joins adenosylcobinamide-GDP and alpha-ribazole to generate adenosylcobalamin (Ado-cobalamin). Also synthesizes adenosylcobalamin 5'-phosphate from adenosylcobinamide-GDP and alpha-ribazole 5'-phosphate. This Nitratidesulfovibrio vulgaris (strain ATCC 29579 / DSM 644 / CCUG 34227 / NCIMB 8303 / VKM B-1760 / Hildenborough) (Desulfovibrio vulgaris) protein is Adenosylcobinamide-GDP ribazoletransferase.